A 693-amino-acid polypeptide reads, in one-letter code: Elongation factor G (693 aa).

A tr-type G domain is found at 8–282 (EHTRNIGIMA…AVIDFMPSPT (275 aa)). GTP-binding positions include 17–24 (AHIDAGKT), 81–85 (DTPGH), and 135–138 (NKMD).

The protein belongs to the TRAFAC class translation factor GTPase superfamily. Classic translation factor GTPase family. EF-G/EF-2 subfamily.

The protein resides in the cytoplasm. In terms of biological role, catalyzes the GTP-dependent ribosomal translocation step during translation elongation. During this step, the ribosome changes from the pre-translocational (PRE) to the post-translocational (POST) state as the newly formed A-site-bound peptidyl-tRNA and P-site-bound deacylated tRNA move to the P and E sites, respectively. Catalyzes the coordinated movement of the two tRNA molecules, the mRNA and conformational changes in the ribosome. In Ruminiclostridium cellulolyticum (strain ATCC 35319 / DSM 5812 / JCM 6584 / H10) (Clostridium cellulolyticum), this protein is Elongation factor G.